We begin with the raw amino-acid sequence, 152 residues long: Superoxide dismutase [Cu-Zn] (152 aa).

Residues histidine 45, histidine 47, and histidine 62 each contribute to the Cu cation site. Cysteine 56 and cysteine 145 are disulfide-bonded. Residues histidine 62, histidine 70, histidine 79, and aspartate 82 each coordinate Zn(2+). Histidine 119 provides a ligand contact to Cu cation.

Belongs to the Cu-Zn superoxide dismutase family. In terms of assembly, homodimer. Cu cation is required as a cofactor. Zn(2+) serves as cofactor.

The protein localises to the cytoplasm. The catalysed reaction is 2 superoxide + 2 H(+) = H2O2 + O2. Destroys radicals which are normally produced within the cells and which are toxic to biological systems. The sequence is that of Superoxide dismutase [Cu-Zn] (SODCC) from Zantedeschia aethiopica (White calla lily).